The chain runs to 230 residues: Large ribosomal subunit protein uL1 (230 aa).

Belongs to the universal ribosomal protein uL1 family. In terms of assembly, part of the 50S ribosomal subunit.

Functionally, binds directly to 23S rRNA. The L1 stalk is quite mobile in the ribosome, and is involved in E site tRNA release. In terms of biological role, protein L1 is also a translational repressor protein, it controls the translation of the L11 operon by binding to its mRNA. This chain is Large ribosomal subunit protein uL1, found in Rhodopseudomonas palustris (strain BisB18).